We begin with the raw amino-acid sequence, 433 residues long: Serine--tRNA ligase (433 aa).

An L-serine-binding site is contributed by 235–237 (TSE). Residue 266–268 (RSE) participates in ATP binding. L-serine is bound at residue E289. 353 to 356 (EISS) provides a ligand contact to ATP. S388 serves as a coordination point for L-serine.

The protein belongs to the class-II aminoacyl-tRNA synthetase family. Type-1 seryl-tRNA synthetase subfamily. As to quaternary structure, homodimer. The tRNA molecule binds across the dimer.

The protein resides in the cytoplasm. The enzyme catalyses tRNA(Ser) + L-serine + ATP = L-seryl-tRNA(Ser) + AMP + diphosphate + H(+). It carries out the reaction tRNA(Sec) + L-serine + ATP = L-seryl-tRNA(Sec) + AMP + diphosphate + H(+). It functions in the pathway aminoacyl-tRNA biosynthesis; selenocysteinyl-tRNA(Sec) biosynthesis; L-seryl-tRNA(Sec) from L-serine and tRNA(Sec): step 1/1. In terms of biological role, catalyzes the attachment of serine to tRNA(Ser). Is also able to aminoacylate tRNA(Sec) with serine, to form the misacylated tRNA L-seryl-tRNA(Sec), which will be further converted into selenocysteinyl-tRNA(Sec). The chain is Serine--tRNA ligase from Burkholderia thailandensis (strain ATCC 700388 / DSM 13276 / CCUG 48851 / CIP 106301 / E264).